The following is a 323-amino-acid chain: Methionyl-tRNA formyltransferase (323 aa).

115 to 118 (SLLP) contacts (6S)-5,6,7,8-tetrahydrofolate.

The protein belongs to the Fmt family.

The catalysed reaction is L-methionyl-tRNA(fMet) + (6R)-10-formyltetrahydrofolate = N-formyl-L-methionyl-tRNA(fMet) + (6S)-5,6,7,8-tetrahydrofolate + H(+). Attaches a formyl group to the free amino group of methionyl-tRNA(fMet). The formyl group appears to play a dual role in the initiator identity of N-formylmethionyl-tRNA by promoting its recognition by IF2 and preventing the misappropriation of this tRNA by the elongation apparatus. This is Methionyl-tRNA formyltransferase from Lactococcus lactis subsp. cremoris (strain SK11).